The chain runs to 979 residues: Translation initiation factor IF-2 (979 aa).

Over residues Leu50–Gln77 the composition is skewed to basic and acidic residues. The segment at Leu50 to Ser385 is disordered. Residues Ser78–Val87 are compositionally biased toward polar residues. 3 stretches are compositionally biased toward basic and acidic residues: residues Ile98–Gly109, Glu121–Ala142, and Glu149–Ala173. Residues Glu174–Asp192 are compositionally biased toward low complexity. Basic and acidic residues-rich tracts occupy residues Glu196–Thr211, Asn219–Ala263, and Pro280–Glu291. The segment covering Ala317–Ala327 has biased composition (low complexity). Positions Gly351–Arg368 are enriched in gly residues. The region spanning Pro479–Glu646 is the tr-type G domain. The interval Gly488–Thr495 is G1. Position 488–495 (Gly488–Thr495) interacts with GTP. The interval Gly513–His517 is G2. A G3 region spans residues Asp534–Gly537. GTP-binding positions include Asp534–His538 and Thr588–Asp591. Residues Thr588–Asp591 are G4. The interval Ser624–Lys626 is G5.

It belongs to the TRAFAC class translation factor GTPase superfamily. Classic translation factor GTPase family. IF-2 subfamily.

Its subcellular location is the cytoplasm. One of the essential components for the initiation of protein synthesis. Protects formylmethionyl-tRNA from spontaneous hydrolysis and promotes its binding to the 30S ribosomal subunits. Also involved in the hydrolysis of GTP during the formation of the 70S ribosomal complex. In Cupriavidus metallidurans (strain ATCC 43123 / DSM 2839 / NBRC 102507 / CH34) (Ralstonia metallidurans), this protein is Translation initiation factor IF-2.